The following is a 308-amino-acid chain: tRNA pseudouridine synthase B (308 aa).

Residue aspartate 44 is the Nucleophile of the active site.

This sequence belongs to the pseudouridine synthase TruB family. Type 1 subfamily.

It carries out the reaction uridine(55) in tRNA = pseudouridine(55) in tRNA. Responsible for synthesis of pseudouridine from uracil-55 in the psi GC loop of transfer RNAs. The protein is tRNA pseudouridine synthase B of Bdellovibrio bacteriovorus (strain ATCC 15356 / DSM 50701 / NCIMB 9529 / HD100).